Here is a 159-residue protein sequence, read N- to C-terminus: MNISIISVGKIKEKFLKAAIDEYSKRLSKYCKLNIIEVPDEKTPDNASLKEENIIKEKEGTLILKHIKDNSFVIALDLKGKSIASEEFSDLIENCRLTGNSTIAFVIGGSLGLSEQVLSRANYRLSFSKMTFPHQLFRVMLLEQVYRAFRILCREPYHK.

S-adenosyl-L-methionine-binding positions include L76, G108, and 127–132 (FSKMTF).

Belongs to the RNA methyltransferase RlmH family. Homodimer.

The protein localises to the cytoplasm. It catalyses the reaction pseudouridine(1915) in 23S rRNA + S-adenosyl-L-methionine = N(3)-methylpseudouridine(1915) in 23S rRNA + S-adenosyl-L-homocysteine + H(+). Its function is as follows. Specifically methylates the pseudouridine at position 1915 (m3Psi1915) in 23S rRNA. The sequence is that of Ribosomal RNA large subunit methyltransferase H from Clostridium botulinum (strain 657 / Type Ba4).